The primary structure comprises 438 residues: 3-phosphoshikimate 1-carboxyvinyltransferase (438 aa).

Positions 26, 27, and 31 each coordinate 3-phosphoshikimate. Lys26 is a phosphoenolpyruvate binding site. Phosphoenolpyruvate-binding residues include Gly99 and Arg127. Residues Ser170, Ser171, Gln172, Ser199, Glu314, and His343 each coordinate 3-phosphoshikimate. A phosphoenolpyruvate-binding site is contributed by Gln172. Glu314 acts as the Proton acceptor in catalysis. Phosphoenolpyruvate-binding residues include Arg347, Arg388, and Lys413.

It belongs to the EPSP synthase family. Monomer.

The protein resides in the cytoplasm. The enzyme catalyses 3-phosphoshikimate + phosphoenolpyruvate = 5-O-(1-carboxyvinyl)-3-phosphoshikimate + phosphate. It participates in metabolic intermediate biosynthesis; chorismate biosynthesis; chorismate from D-erythrose 4-phosphate and phosphoenolpyruvate: step 6/7. Its function is as follows. Catalyzes the transfer of the enolpyruvyl moiety of phosphoenolpyruvate (PEP) to the 5-hydroxyl of shikimate-3-phosphate (S3P) to produce enolpyruvyl shikimate-3-phosphate and inorganic phosphate. The sequence is that of 3-phosphoshikimate 1-carboxyvinyltransferase from Mycobacterium sp. (strain JLS).